Consider the following 314-residue polypeptide: Methionyl-tRNA formyltransferase (314 aa).

111 to 114 provides a ligand contact to (6S)-5,6,7,8-tetrahydrofolate; it reads SLLP.

The protein belongs to the Fmt family.

It carries out the reaction L-methionyl-tRNA(fMet) + (6R)-10-formyltetrahydrofolate = N-formyl-L-methionyl-tRNA(fMet) + (6S)-5,6,7,8-tetrahydrofolate + H(+). Functionally, attaches a formyl group to the free amino group of methionyl-tRNA(fMet). The formyl group appears to play a dual role in the initiator identity of N-formylmethionyl-tRNA by promoting its recognition by IF2 and preventing the misappropriation of this tRNA by the elongation apparatus. This Chlorobium chlorochromatii (strain CaD3) protein is Methionyl-tRNA formyltransferase.